Reading from the N-terminus, the 491-residue chain is Probable glycine dehydrogenase (decarboxylating) subunit 2 (491 aa).

At K273 the chain carries N6-(pyridoxal phosphate)lysine.

It belongs to the GcvP family. C-terminal subunit subfamily. As to quaternary structure, the glycine cleavage system is composed of four proteins: P, T, L and H. In this organism, the P 'protein' is a heterodimer of two subunits. Pyridoxal 5'-phosphate is required as a cofactor.

It catalyses the reaction N(6)-[(R)-lipoyl]-L-lysyl-[glycine-cleavage complex H protein] + glycine + H(+) = N(6)-[(R)-S(8)-aminomethyldihydrolipoyl]-L-lysyl-[glycine-cleavage complex H protein] + CO2. In terms of biological role, the glycine cleavage system catalyzes the degradation of glycine. The P protein binds the alpha-amino group of glycine through its pyridoxal phosphate cofactor; CO(2) is released and the remaining methylamine moiety is then transferred to the lipoamide cofactor of the H protein. The chain is Probable glycine dehydrogenase (decarboxylating) subunit 2 from Bacillus cytotoxicus (strain DSM 22905 / CIP 110041 / 391-98 / NVH 391-98).